A 320-amino-acid chain; its full sequence is Malate dehydrogenase (320 aa).

Residues 10-15 (GSGMIG) and D34 each bind NAD(+). Residues R83 and R89 each coordinate substrate. NAD(+) contacts are provided by residues N96 and 119–121 (ITN). Positions 121 and 152 each coordinate substrate. H176 (proton acceptor) is an active-site residue.

It belongs to the LDH/MDH superfamily. MDH type 3 family.

It carries out the reaction (S)-malate + NAD(+) = oxaloacetate + NADH + H(+). Its function is as follows. Catalyzes the reversible oxidation of malate to oxaloacetate. The sequence is that of Malate dehydrogenase from Brucella anthropi (strain ATCC 49188 / DSM 6882 / CCUG 24695 / JCM 21032 / LMG 3331 / NBRC 15819 / NCTC 12168 / Alc 37) (Ochrobactrum anthropi).